We begin with the raw amino-acid sequence, 232 residues long: Large ribosomal subunit protein uL1 (232 aa).

Belongs to the universal ribosomal protein uL1 family. In terms of assembly, part of the 50S ribosomal subunit.

Functionally, binds directly to 23S rRNA. The L1 stalk is quite mobile in the ribosome, and is involved in E site tRNA release. Its function is as follows. Protein L1 is also a translational repressor protein, it controls the translation of the L11 operon by binding to its mRNA. In Chlamydia trachomatis serovar L2b (strain UCH-1/proctitis), this protein is Large ribosomal subunit protein uL1.